Here is a 225-residue protein sequence, read N- to C-terminus: NAD(P)H-quinone oxidoreductase subunit K, chloroplastic (225 aa).

Cys-43, Cys-44, Cys-108, and Cys-139 together coordinate [4Fe-4S] cluster.

The protein belongs to the complex I 20 kDa subunit family. NDH is composed of at least 16 different subunits, 5 of which are encoded in the nucleus. Requires [4Fe-4S] cluster as cofactor.

It is found in the plastid. Its subcellular location is the chloroplast thylakoid membrane. It catalyses the reaction a plastoquinone + NADH + (n+1) H(+)(in) = a plastoquinol + NAD(+) + n H(+)(out). The catalysed reaction is a plastoquinone + NADPH + (n+1) H(+)(in) = a plastoquinol + NADP(+) + n H(+)(out). Its function is as follows. NDH shuttles electrons from NAD(P)H:plastoquinone, via FMN and iron-sulfur (Fe-S) centers, to quinones in the photosynthetic chain and possibly in a chloroplast respiratory chain. The immediate electron acceptor for the enzyme in this species is believed to be plastoquinone. Couples the redox reaction to proton translocation, and thus conserves the redox energy in a proton gradient. This Solanum bulbocastanum (Wild potato) protein is NAD(P)H-quinone oxidoreductase subunit K, chloroplastic.